Consider the following 1166-residue polypeptide: MINRDNKKAITKKGMISNRLNKFSIRKYTVGTASILVGTTLIFGLGNQEAKAAENTSTENAKQDDATTSDNKEVVSETENNSTTENNSTNPIKKETNTDSQPEAKKESTSSSTQKQQNNVTATTETKPQNIEKENVKPSTDKTATEDTSVILEEKKAPNNTNNDVTTKPSTSEPSTSEIQTKPTTPQESTNIENSQPQPTPSKVDNQVTDATNPKEPVNVSKEELKNNPEKLKELVRNDSNTDHSTKPVATAPTSVAPKRVNAKMRFAVAQPAAVASNNVNDLIKVTKQTIKVGDGKDNVAAAHDGKDIEYDTEFTIDNKVKKGDTMTINYDKNVIPSDLTDKNDPIDITDPSGEVIAKGTFDKATKQITYTFTDYVDKYEDIKSRLTLYSYIDKKTVPNETSLNLTFATAGKETSQNVTVDYQDPMVHGDSNIQSIFTKLDEDKQTIEQQIYVNPLKKSATNTKVDIAGSQVDDYGNIKLGNGSTIIDQNTEIKVYKVNSDQQLPQSNRIYDFSQYEDVTSQFDNKKSFSNNVATLDFGDINSAYIIKVVSKYTPTSDGELDIAQGTSMRTTDKYGYYNYAGYSNFIVTSNDTGGGDGTVKPEEKLYKIGDYVWEDVDKDGVQGTDSKEKPMANVLVTLTYPDGTTKSVRTDANGHYEFGGLKDGETYTVKFETPTGYLPTKVNGTTDGEKDSNGSSVTVKINGKDDMSLDTGFYKEPKYNLGDYVWEDTNKDGIQDANEPGIKDVKVTLKDSTGKVIGTTTTDASGKYKFTDLDNGNYTVEFETPAGYTPTVKNTTADDKDSNGLTTTGVIKDADNMTLDRGFYKTPKYSLGDYVWYDSNKDGKQDSTEKGIKDVTVTLQNEKGEVIGTTKTDENGKYRFDNLDSGKYKVIFEKPAGLTQTVTNTTEDDKDADGGEVDVTITDHDDFTLDNGYFEEDTSDSDSDSDSDSDSDSDSDSDSDSDSDSDSDSDSDSDSDSDSDSDSDSDSDSDSDSDSDSDSDSDSDSDSDSDSDSDSDSDSDSDSDSDSDSDSDSDSDSDSDSDSDSDSDSDSDSDSDSDSDSDSDSDSDSDSDSDSDSDSDSDSDSDSDSDSDSDSDSDSDSDSDAGKHTPVKPMSTTKDHHNKAKALPETGSENNGSNNATLFGGLFAALGSLLLFGRRKKQNK.

Positions 1-52 are cleaved as a signal peptide; sequence MINRDNKKAITKKGMISNRLNKFSIRKYTVGTASILVGTTLIFGLGNQEAKA. The short motif at 23 to 34 is the YSIRK-G/S signaling motif element; that stretch reads FSIRKYTVGTAS. Residues 53–606 are ligand binding A region; that stretch reads AENTSTENAK…GDGTVKPEEK (554 aa). The segment at 54 to 230 is disordered; the sequence is ENTSTENAKQ…SKEELKNNPE (177 aa). Basic and acidic residues predominate over residues 61–75; it reads AKQDDATTSDNKEVV. Over residues 77–90 the composition is skewed to low complexity; it reads ETENNSTTENNSTN. Positions 92–108 are enriched in basic and acidic residues; it reads IKKETNTDSQPEAKKES. Residues 118 to 129 show a composition bias toward polar residues; it reads NNVTATTETKPQ. Basic and acidic residues predominate over residues 130–145; it reads NIEKENVKPSTDKTAT. Positions 166–178 are enriched in low complexity; sequence TTKPSTSEPSTSE. The span at 179 to 212 shows a compositional bias: polar residues; the sequence is IQTKPTTPQESTNIENSQPQPTPSKVDNQVTDAT. Positions 221 to 230 are enriched in basic and acidic residues; it reads SKEELKNNPE. CNA-B domains are found at residues 607 to 719, 720 to 829, and 830 to 940; these read LYKI…YKEP, KYNL…YKTP, and KYSL…EEDT. The segment at 904–1141 is disordered; the sequence is VTNTTEDDKD…TGSENNGSNN (238 aa). Composition is skewed to acidic residues over residues 908 to 918 and 935 to 1105; these read TEDDKDADGGE and YFEE…DSDS. Positions 1129-1133 match the LPXTG sorting signal motif; sequence LPETG. Thr-1132 bears the Pentaglycyl murein peptidoglycan amidated threonine mark. Residues 1133–1166 constitute a propeptide, removed by sortase; sequence GSENNGSNNATLFGGLFAALGSLLLFGRRKKQNK.

The protein belongs to the serine-aspartate repeat-containing protein (SDr) family. As to quaternary structure, interacts with host complement factor H/CFAH (via C-terminus). Interacts with host complement regulator C4BPA.

It is found in the secreted. The protein resides in the cell wall. Its function is as follows. Cell surface-associated calcium-binding protein which plays an important role in adhesion and pathogenesis. Contributes to the resistance to killing by innate immune components in blood and thus attenuates bacterial clearance by interacting with host complement factor H/CFAH and modulating its activity. Inhibits also bacterial opsonization and killing by interacting with host complement regulator C4BPA and thus inhibiting classical complement pathway activation. This Staphylococcus aureus (strain Newman) protein is Serine-aspartate repeat-containing protein E (sdrE).